Here is a 132-residue protein sequence, read N- to C-terminus: Ribonuclease P protein component 4 (132 aa).

Zn(2+)-binding residues include C67, C70, C96, and C99.

The protein belongs to the eukaryotic/archaeal RNase P protein component 4 family. In terms of assembly, consists of a catalytic RNA component and at least 4-5 protein subunits. It depends on Zn(2+) as a cofactor.

The protein resides in the cytoplasm. The catalysed reaction is Endonucleolytic cleavage of RNA, removing 5'-extranucleotides from tRNA precursor.. Functionally, part of ribonuclease P, a protein complex that generates mature tRNA molecules by cleaving their 5'-ends. In Thermococcus kodakarensis (strain ATCC BAA-918 / JCM 12380 / KOD1) (Pyrococcus kodakaraensis (strain KOD1)), this protein is Ribonuclease P protein component 4.